The primary structure comprises 414 residues: Succinylornithine transaminase (414 aa).

K260 is subject to N6-(pyridoxal phosphate)lysine.

The protein belongs to the class-III pyridoxal-phosphate-dependent aminotransferase family. AstC subfamily. Pyridoxal 5'-phosphate is required as a cofactor.

The catalysed reaction is N(2)-succinyl-L-ornithine + 2-oxoglutarate = N-succinyl-L-glutamate 5-semialdehyde + L-glutamate. The protein operates within amino-acid degradation; L-arginine degradation via AST pathway; L-glutamate and succinate from L-arginine: step 3/5. Its function is as follows. Catalyzes the transamination of N(2)-succinylornithine and alpha-ketoglutarate into N(2)-succinylglutamate semialdehyde and glutamate. Can also act as an acetylornithine aminotransferase. In Yersinia pseudotuberculosis serotype O:1b (strain IP 31758), this protein is Succinylornithine transaminase.